Here is a 490-residue protein sequence, read N- to C-terminus: Metal cation symporter ZIP14 (490 aa).

An N-terminal signal peptide occupies residues 1 to 28; it reads MKLLHPAFQSCLLLTLLGLWRTTPEAHA. The Extracellular portion of the chain corresponds to 29-155; that stretch reads SSPGAPAISA…PSAVEVWGYG (127 aa). 3 N-linked (GlcNAc...) asparagine glycosylation sites follow: Asn-75, Asn-85, and Asn-100. A helical membrane pass occupies residues 156–176; sequence LLCVTVISLCSLLGASVVPFM. The Cytoplasmic portion of the chain corresponds to 177–184; the sequence is KKTFYKRL. A helical transmembrane segment spans residues 185–205; sequence LLYFIALAIGTLYSNALFQLI. The Extracellular portion of the chain corresponds to 206 to 222; it reads PEAFGFNPLEDYYVSKS. A helical transmembrane segment spans residues 223–243; it reads AVVFGGFYLFFFTEKILKILL. Over 244-395 the chain is Cytoplasmic; the sequence is KQKNEHHHGH…LLNAGMSIQQ (152 aa). Residues 249–256 carry the HHHGHXHX-motif motif; sequence HHHGHSHY. The XEXPHE-motif signature appears at 374 to 379; that stretch reads EEFPHE. The helical transmembrane segment at 396-416 threads the bilayer; the sequence is ALFFNFLSACCCYLGLAFGIL. Topologically, residues 417-422 are extracellular; sequence AGSHFS. Residues 423 to 443 traverse the membrane as a helical segment; the sequence is ANWIFALAGGMFLYISLADMF. The Cytoplasmic segment spans residues 444–458; that stretch reads PEMNEVCQEDERKGS. Residues 459-479 form a helical membrane-spanning segment; that stretch reads ILIPFVIQNLGLLTGFTIMVV. Topologically, residues 480–490 are extracellular; it reads LTMYSGQIQIG.

Belongs to the ZIP transporter (TC 2.A.5) family. As to quaternary structure, homotrimer. In terms of processing, ubiquitinated. Ubiquitination occurs upon iron depletion. The ubiquitinated form undergoes proteasomal degradation. Post-translationally, N-glycosylated. N-glycosylation at Asn-100 is required for iron-regulated extraction of the transporter from membranes and subsequent proteasomal degradation.

It localises to the cell membrane. The protein localises to the apical cell membrane. It is found in the basolateral cell membrane. The protein resides in the early endosome membrane. Its subcellular location is the late endosome membrane. It localises to the lysosome membrane. It carries out the reaction Zn(2+)(out) + 2 hydrogencarbonate(out) = Zn(2+)(in) + 2 hydrogencarbonate(in). The catalysed reaction is Mn(2+)(out) + 2 hydrogencarbonate(out) = Mn(2+)(in) + 2 hydrogencarbonate(in). It catalyses the reaction Fe(2+)(out) + 2 hydrogencarbonate(out) = Fe(2+)(in) + 2 hydrogencarbonate(in). The enzyme catalyses Cd(2+)(out) + 2 hydrogencarbonate(out) = Cd(2+)(in) + 2 hydrogencarbonate(in). Its function is as follows. Electroneutral transporter of the plasma membrane mediating the cellular uptake of the divalent metal cations zinc, manganese and iron that are important for tissue homeostasis, metabolism, development and immunity. Functions as an energy-dependent symporter, transporting through the membranes an electroneutral complex composed of a divalent metal cation and two bicarbonate anions. Beside these endogenous cellular substrates, can also import cadmium a non-essential metal which is cytotoxic and carcinogenic. Controls the cellular uptake by the intestinal epithelium of systemic zinc, which is in turn required to maintain tight junctions and the intestinal permeability. Modifies the activity of zinc-dependent phosphodiesterases, thereby indirectly regulating G protein-coupled receptor signaling pathways important for gluconeogenesis and chondrocyte differentiation. Regulates insulin receptor signaling, glucose uptake, glycogen synthesis and gluconeogenesis in hepatocytes through the zinc-dependent intracellular catabolism of insulin. Through zinc cellular uptake also plays a role in the adaptation of cells to endoplasmic reticulum stress. Major manganese transporter of the basolateral membrane of intestinal epithelial cells, it plays a central role in manganese systemic homeostasis through intestinal manganese uptake. Also involved in manganese extracellular uptake by cells of the blood-brain barrier. May also play a role in manganese and zinc homeostasis participating in their elimination from the blood through the hepatobiliary excretion. Also functions in the extracellular uptake of free iron. May also function intracellularly and mediate the transport from endosomes to cytosol of iron endocytosed by transferrin. Plays a role in innate immunity by regulating the expression of cytokines by activated macrophages. The sequence is that of Metal cation symporter ZIP14 from Pongo abelii (Sumatran orangutan).